We begin with the raw amino-acid sequence, 246 residues long: Putative KilA-N domain-containing protein L33 (246 aa).

One can recognise a KilA-N domain in the interval 20 to 129; that stretch reads RYTKCQYCDI…AKVSLWIEEW (110 aa).

In Acanthamoeba polyphaga mimivirus (APMV), this protein is Putative KilA-N domain-containing protein L33.